The primary structure comprises 408 residues: Multidrug resistance protein MdtG (408 aa).

Helical transmembrane passes span Leu-16–Phe-36, Ile-58–Ala-78, Leu-92–Ile-112, Ala-115–Val-135, Thr-146–Ala-166, Pro-173–Ile-193, Leu-224–Leu-244, Val-256–Pro-276, Ile-290–Thr-310, Phe-319–Asn-339, and Ala-378–Leu-398.

This sequence belongs to the major facilitator superfamily. DHA1 family. MdtG (TC 2.A.1.2.20) subfamily.

Its subcellular location is the cell inner membrane. In terms of biological role, confers resistance to fosfomycin and deoxycholate. The protein is Multidrug resistance protein MdtG of Escherichia coli O6:K15:H31 (strain 536 / UPEC).